A 314-amino-acid polypeptide reads, in one-letter code: DNA-directed RNA polymerase subunit alpha (314 aa).

An alpha N-terminal domain (alpha-NTD) region spans residues 1-228; sequence MIEIEKPKIE…EHLNIFVGLT (228 aa). Residues 245-314 are alpha C-terminal domain (alpha-CTD); that stretch reads KEKVLEMTIE…ELGLSLRKDD (70 aa).

This sequence belongs to the RNA polymerase alpha chain family. As to quaternary structure, homodimer. The RNAP catalytic core consists of 2 alpha, 1 beta, 1 beta' and 1 omega subunit. When a sigma factor is associated with the core the holoenzyme is formed, which can initiate transcription.

It carries out the reaction RNA(n) + a ribonucleoside 5'-triphosphate = RNA(n+1) + diphosphate. DNA-dependent RNA polymerase catalyzes the transcription of DNA into RNA using the four ribonucleoside triphosphates as substrates. In Geobacillus kaustophilus (strain HTA426), this protein is DNA-directed RNA polymerase subunit alpha.